The sequence spans 368 residues: MTVKLTIDCMGGDHGPSVTVPAAVKFVRAHPDAHLMLVGIESAIRAQLKKLKALDDPALTIVPATEVVAMDDPVEVALRKKKDSSMRVALNHVKEGAAQACISAGNTGALMAVSRYVLKTLPGIERPAIAFALPNPTGYTMMLDLGANVDCEPQHLLQFAEMGHALVAALEGKERPTIGLLNIGEEVIKGNETIKRAGELLRASTLNFRGNVEGNDIYKGTVDVIVCDGFVGNVALKTSEGLAQMLSDIIREEFGRSLMSKLMALLALPVLMRFKKRVDHRQYNGAALLGLKSLVIKSHGSADAYAFEWAIKRGYDAVKNGVLERLARAMADNSVSLGEGEHNAGGAGHASPAAGHHAEPSAAQSSKA.

Residues 337 to 368 (LGEGEHNAGGAGHASPAAGHHAEPSAAQSSKA) are disordered. Residues 349-368 (HASPAAGHHAEPSAAQSSKA) are compositionally biased toward low complexity.

It belongs to the PlsX family. In terms of assembly, homodimer. Probably interacts with PlsY.

Its subcellular location is the cytoplasm. The enzyme catalyses a fatty acyl-[ACP] + phosphate = an acyl phosphate + holo-[ACP]. It functions in the pathway lipid metabolism; phospholipid metabolism. Catalyzes the reversible formation of acyl-phosphate (acyl-PO(4)) from acyl-[acyl-carrier-protein] (acyl-ACP). This enzyme utilizes acyl-ACP as fatty acyl donor, but not acyl-CoA. The polypeptide is Phosphate acyltransferase (Burkholderia lata (strain ATCC 17760 / DSM 23089 / LMG 22485 / NCIMB 9086 / R18194 / 383)).